A 161-amino-acid polypeptide reads, in one-letter code: Ribosome maturation factor RimP (161 aa).

This sequence belongs to the RimP family.

The protein resides in the cytoplasm. Functionally, required for maturation of 30S ribosomal subunits. This chain is Ribosome maturation factor RimP, found in Rickettsia typhi (strain ATCC VR-144 / Wilmington).